The following is a 237-amino-acid chain: dTDP-3-amino-3,4,6-trideoxy-alpha-D-glucopyranose N,N-dimethyltransferase (237 aa).

Positions 14 and 17 each coordinate substrate. Residues tyrosine 21, alanine 46, glutamate 67, 89–90 (DM), and methionine 105 each bind S-adenosyl-L-methionine. Residues 145-147 (TFA), serine 152, 165-169 (RVSHS), and arginine 229 each bind substrate.

It belongs to the methyltransferase TylM1/DesVI family. In terms of assembly, homodimer.

It carries out the reaction dTDP-3-amino-3,4,6-trideoxy-alpha-D-glucose + 2 S-adenosyl-L-methionine = dTDP-alpha-D-desosamine + 2 S-adenosyl-L-homocysteine + 2 H(+). It participates in antibiotic biosynthesis. Its function is as follows. S-adenosyl-L-methionine-dependent methyltransferase involved in the biosynthesis of desosamine, found in certain macrolide antibiotics such as erthyromycin, azithromycin, clarithromycin, and methymycin. Catalyzes the last step in the biosynthesis of dTDP-desosamine, i.e. the N,N-dimethylation of the 3-amino group of dTDP-3-amino-3,4,6-trideoxy-alpha-D-glucose. The protein is dTDP-3-amino-3,4,6-trideoxy-alpha-D-glucopyranose N,N-dimethyltransferase of Streptomyces venezuelae.